Consider the following 399-residue polypeptide: STOREKEEPER protein (399 aa).

2 disordered regions span residues 1 to 160 (MAPK…RSLW) and 250 to 301 (GISN…EEQQ). Residues 20–54 (EEQELVEESQEEEEQQSREEEGEEESGEETEEDEE) are compositionally biased toward acidic residues. The span at 69–79 (KLVQTPQKPQF) shows a compositional bias: polar residues. Composition is skewed to low complexity over residues 80 to 100 (SSES…SGNS) and 116 to 125 (AAKAATPSKP). Composition is skewed to basic and acidic residues over residues 143–152 (KIAEEEEKKS) and 270–299 (KTVE…KEEE).

This sequence belongs to the GeBP family. In terms of tissue distribution, expressed in tubers and in leaves treated with sucrose.

The protein localises to the nucleus. Functionally, may act as a transcriptional regulator. Binds specifically to the B-box motif, a promoter element that is required for the tuber-specific and sucrose inducible expression of the patatin gene. The protein is STOREKEEPER protein of Solanum tuberosum (Potato).